Here is a 56-residue protein sequence, read N- to C-terminus: Conotoxin Bu12 (56 aa).

The first 2 residues, 1-2, serve as a signal peptide directing secretion; it reads TA. Positions 3-25 are excised as a propeptide; the sequence is EDSRGTQLHRALRKATKLPVSTR. Cystine bridges form between C26/C40, C33/C44, and C39/C49.

It belongs to the conotoxin O1 superfamily. In terms of tissue distribution, expressed by the venom duct.

It localises to the secreted. This Conus bullatus (Bubble cone) protein is Conotoxin Bu12.